The chain runs to 205 residues: LexA repressor (205 aa).

Residues 28 to 48 constitute a DNA-binding region (H-T-H motif); the sequence is RAEIAKRLGFKSANAAEEHLK. Residues serine 122 and lysine 159 each act as for autocatalytic cleavage activity in the active site.

Belongs to the peptidase S24 family. As to quaternary structure, homodimer.

It catalyses the reaction Hydrolysis of Ala-|-Gly bond in repressor LexA.. Represses a number of genes involved in the response to DNA damage (SOS response), including recA and lexA. In the presence of single-stranded DNA, RecA interacts with LexA causing an autocatalytic cleavage which disrupts the DNA-binding part of LexA, leading to derepression of the SOS regulon and eventually DNA repair. The chain is LexA repressor from Shewanella woodyi (strain ATCC 51908 / MS32).